Consider the following 277-residue polypeptide: Diaminopimelate epimerase (277 aa).

Positions 11 and 72 each coordinate substrate. Cys81 functions as the Proton donor in the catalytic mechanism. Substrate-binding positions include 82 to 83, Asn189, and 207 to 208; these read GN and ER. The active-site Proton acceptor is the Cys217. 218–219 is a substrate binding site; it reads GT.

Belongs to the diaminopimelate epimerase family. Homodimer.

The protein localises to the cytoplasm. The enzyme catalyses (2S,6S)-2,6-diaminopimelate = meso-2,6-diaminopimelate. The protein operates within amino-acid biosynthesis; L-lysine biosynthesis via DAP pathway; DL-2,6-diaminopimelate from LL-2,6-diaminopimelate: step 1/1. Functionally, catalyzes the stereoinversion of LL-2,6-diaminopimelate (L,L-DAP) to meso-diaminopimelate (meso-DAP), a precursor of L-lysine and an essential component of the bacterial peptidoglycan. This Hydrogenobaculum sp. (strain Y04AAS1) protein is Diaminopimelate epimerase.